A 312-amino-acid chain; its full sequence is tRNA dimethylallyltransferase (312 aa).

12-19 (GPTAIGKS) serves as a coordination point for ATP. 14-19 (TAIGKS) serves as a coordination point for substrate. Interaction with substrate tRNA stretches follow at residues 38–41 (DSKL) and 162–166 (QRVLR).

Belongs to the IPP transferase family. Monomer. The cofactor is Mg(2+).

It catalyses the reaction adenosine(37) in tRNA + dimethylallyl diphosphate = N(6)-dimethylallyladenosine(37) in tRNA + diphosphate. In terms of biological role, catalyzes the transfer of a dimethylallyl group onto the adenine at position 37 in tRNAs that read codons beginning with uridine, leading to the formation of N6-(dimethylallyl)adenosine (i(6)A). This chain is tRNA dimethylallyltransferase, found in Buchnera aphidicola subsp. Cinara cedri (strain Cc).